Reading from the N-terminus, the 210-residue chain is BAG family molecular chaperone regulator 2 (210 aa).

Alanine 2 bears the N-acetylalanine mark. Residues serine 20, serine 31, and serine 73 each carry the phosphoserine modification. Positions 20 to 60 form a coiled coil; the sequence is SMADRSSRLLESLDQLELRVEALRDAATAVEQEKEILLEMI. Residues 109 to 189 enclose the BAG domain; sequence SLKHATRIID…NIDNSDKAIK (81 aa).

Binds to the ATPase domain of HSP/HSC70 chaperones. May interact with NWD1. Interacts with HSPA1A (via NBD), HSPA1B (via NBD) and HSPA8. May interact with DNJC9; the interaction seems to be histone-dependent.

Co-chaperone for HSP70 and HSC70 chaperone proteins. Acts as a nucleotide-exchange factor (NEF) promoting the release of ADP from the HSP70 and HSC70 proteins thereby triggering client/substrate protein release. The sequence is that of BAG family molecular chaperone regulator 2 (Bag2) from Mus musculus (Mouse).